We begin with the raw amino-acid sequence, 253 residues long: Complement C1q subcomponent subunit B (253 aa).

An N-terminal signal peptide occupies residues 1-27 (MMMKIPWGSIPVLMLLLLLGLIDISQA). At Q28 the chain carries Pyrrolidone carboxylic acid. 4-hydroxyproline is present on residues P35, P38, P41, P53, and P56. 2 consecutive Collagen-like domains span residues 37–86 (IPGI…PGNP) and 60–114 (GEKG…GESG). The tract at residues 38 to 115 (PGIPGIPGTP…APGPKGESGD (78 aa)) is disordered. 2 positions are modified to 5-hydroxylysine: K59 and K62. Position 65 is a 4-hydroxyproline (P65). Over residues 70 to 79 (DHGEFGEKGD) the composition is skewed to basic and acidic residues. K77 carries the post-translational modification 5-hydroxylysine. The segment covering 80–92 (PGIPGNPGKVGPK) has biased composition (low complexity). P83 and P86 each carry 4-hydroxyproline. 5-hydroxylysine occurs at positions 92 and 98. Over residues 96–105 (GPKGGPGAPG) the composition is skewed to gly residues. P101, P104, and P107 each carry 4-hydroxyproline. A 5-hydroxylysine modification is found at K110. The C1q domain maps to 117 to 253 (KATQKIAFSA…GFLLFPDMEA (137 aa)). A disulfide bridge connects residues C181 and C198. Ca(2+) is bound by residues D199, Y200, and Q206.

Core component of the complement C1 complex, a calcium-dependent complex composed of 1 molecule of the C1Q subcomplex, 2 molecules of C1R and 2 molecules of C1S. The C1Q subcomplex is composed 18 subunits: 3 chains of C1QA, C1QB, and C1QC trimerize to form 6 collagen-like triple helices connected to six globular ligand-recognition modules (C1q domain). Post-translationally, hydroxylated on lysine and proline residues. Hydroxylated lysine residues can be glycosylated. Human C1Q contains up to 68.3 hydroxylysine-galactosylglucose residues and up to 2.5 hydroxylysine-galactose per molecule. Total percentage hydroxylysine residues glycosylated is 86.4%.

The protein localises to the secreted. It localises to the cell surface. With respect to regulation, the C1Q subcomplex is inhibited by sulfated molecules, such as triterpenoid sulfates, heparan sulfate, or chondroitin sulfates. Its function is as follows. Core component of the complement C1 complex, a multiprotein complex that initiates the classical pathway of the complement system, a cascade of proteins that leads to phagocytosis and breakdown of pathogens and signaling that strengthens the adaptive immune system. The classical complement pathway is initiated by the C1Q subcomplex of the C1 complex, which specifically binds IgG or IgM immunoglobulins complexed with antigens, forming antigen-antibody complexes on the surface of pathogens: C1QA, together with C1QB and C1QC, specifically recognizes and binds the Fc regions of IgG or IgM via its C1q domain. Immunoglobulin-binding activates the proenzyme C1R, which cleaves C1S, initiating the proteolytic cascade of the complement system. The C1Q subcomplex is activated by a hexamer of IgG complexed with antigens, while it is activated by a pentameric IgM. The C1Q subcomplex also recognizes and binds phosphatidylserine exposed on the surface of cells undergoing programmed cell death, possibly promoting activation of the complement system. The protein is Complement C1q subcomponent subunit B of Homo sapiens (Human).